A 209-amino-acid polypeptide reads, in one-letter code: Large ribosomal subunit protein uL4 (209 aa).

Positions 45 to 80 are disordered; it reads RQGTHKAKERSELSGSTRKLIRQKGSGGARRGDINS.

The protein belongs to the universal ribosomal protein uL4 family. In terms of assembly, part of the 50S ribosomal subunit.

In terms of biological role, one of the primary rRNA binding proteins, this protein initially binds near the 5'-end of the 23S rRNA. It is important during the early stages of 50S assembly. It makes multiple contacts with different domains of the 23S rRNA in the assembled 50S subunit and ribosome. Its function is as follows. Forms part of the polypeptide exit tunnel. This Porphyromonas gingivalis (strain ATCC BAA-308 / W83) protein is Large ribosomal subunit protein uL4.